The chain runs to 1496 residues: Carbamoyl-phosphate synthase [ammonia], mitochondrial (1496 aa).

A mitochondrion-targeting transit peptide spans 1–33 (MTRILSVFKTAKTGVLNAAAHRYRGFSKAGVRL). Positions 34 to 214 (MSVKAQTANL…TKVFGKGNPV (181 aa)) are anthranilate phosphoribosyltransferase homolog. Positions 215–401 (RIVAVDCGVK…MSLIKKGKGT (187 aa)) constitute a Glutamine amidotransferase type-1 domain. The For GATase activity role is filled by Cys-290. 2 consecutive ATP-grasp domains span residues 548–740 (SDKL…KIAL) and 1090–1281 (SAVL…KVMI). One can recognise an MGS-like domain in the interval 1352–1496 (FKLPQKGILI…YRQFGGAKPS (145 aa)). 6 residues coordinate N-acetyl-L-glutamate: Thr-1388, Thr-1391, Trp-1407, Asn-1433, Asn-1436, and Asn-1445.

It is found in the mitochondrion. It catalyses the reaction hydrogencarbonate + NH4(+) + 2 ATP = carbamoyl phosphate + 2 ADP + phosphate + 2 H(+). Its activity is regulated as follows. Requires N-acetyl-L-glutamate (NAG) as an allosteric activator. Involved in the urea cycle of ureotelic animals where the enzyme plays an important role in removing excess ammonia from the cell. This chain is Carbamoyl-phosphate synthase [ammonia], mitochondrial, found in Aquarana catesbeiana (American bullfrog).